We begin with the raw amino-acid sequence, 519 residues long: MRAMFRTPRMPQRKTAAILVIGDEILKGTTRDTNSHFLCKRLHKLGVNIRKISVIGDDISEISREVQSASGAYDYVITSGGVGPTHDDKTYLGLAHAFTDQMQFSDEIRQAVNRFLPTYTAKKRAEGVGEGLEEAVRLATEKLCTIPKMSQLLWGTQKINGSLSTFPVVRISNVVALPGVPKFCERAFDELQDQLFPIEERQSLCFETLYTDLDEFDFSKKLTDLAAQFEDRNVQIGSYPELKNKFFKTKLTIETESSETMEAVVTSLRELLAGHIVYYDSHAWLDIVTKWKAFKKRKASENQIEFIQKLNEAESIVEEIVEKYPLEQIALSFNGGKDCTVLLHLLRLKVDEKYGPSTPIQGFHIMVEDQFPEATQFIIDAAKFYNIQVLEFPGPLKTGLAALKKTRPSIIPVLMGSRATDPNGKYMKTPVEWTDSDWPQVLRVCPILNWTYTDVWHMLRGLCVPYCKLYDQGYTSLGGRDNTVKHPALRIVSSDGREHYLPAYKLHNDAEERCNRSNI.

The segment at 17-108 (AILVIGDEIL…TDQMQFSDEI (92 aa)) is molybdenum cofactor biosynthesis protein-like. Positions 328 to 485 (QIALSFNGGK…SLGGRDNTVK (158 aa)) are FAD synthase.

The protein in the N-terminal section; belongs to the MoaB/Mog family. It in the C-terminal section; belongs to the PAPS reductase family. FAD1 subfamily. It depends on Mg(2+) as a cofactor.

It catalyses the reaction FMN + ATP + H(+) = FAD + diphosphate. It participates in cofactor biosynthesis; FAD biosynthesis; FAD from FMN: step 1/1. Its function is as follows. Catalyzes the adenylation of flavin mononucleotide (FMN) to form flavin adenine dinucleotide (FAD) coenzyme. In Caenorhabditis elegans, this protein is Probable FAD synthase.